We begin with the raw amino-acid sequence, 279 residues long: Thymidylate synthase 1 (279 aa).

Residue Arg141–Arg142 coordinates dUMP. Residue Cys161 is the Nucleophile of the active site. DUMP is bound by residues Arg181–Asp184, Asn192, and His222–Tyr224. Residue Asp184 coordinates (6R)-5,10-methylene-5,6,7,8-tetrahydrofolate. Position 278 (Ala278) interacts with (6R)-5,10-methylene-5,6,7,8-tetrahydrofolate.

Belongs to the thymidylate synthase family. Bacterial-type ThyA subfamily. As to quaternary structure, homodimer.

The protein localises to the cytoplasm. The catalysed reaction is dUMP + (6R)-5,10-methylene-5,6,7,8-tetrahydrofolate = 7,8-dihydrofolate + dTMP. The protein operates within pyrimidine metabolism; dTTP biosynthesis. Its function is as follows. Catalyzes the reductive methylation of 2'-deoxyuridine-5'-monophosphate (dUMP) to 2'-deoxythymidine-5'-monophosphate (dTMP) while utilizing 5,10-methylenetetrahydrofolate (mTHF) as the methyl donor and reductant in the reaction, yielding dihydrofolate (DHF) as a by-product. This enzymatic reaction provides an intracellular de novo source of dTMP, an essential precursor for DNA biosynthesis. This chain is Thymidylate synthase 1, found in Bacillus subtilis (strain 168).